A 128-amino-acid polypeptide reads, in one-letter code: Thor profilin (128 aa).

Belongs to the Asgard profilin family.

It localises to the cytoplasm. The protein resides in the cytoskeleton. Functionally, has no profilin activity against rabbit actin. This chain is Thor profilin, found in Thorarchaeota archaeon (strain AB_25).